Here is a 1080-residue protein sequence, read N- to C-terminus: uncharacterized protein (1080 aa).

Residues 1 to 17 form the signal peptide; the sequence is MHKLLVIIAHIIVCAYA. The Extracellular portion of the chain corresponds to 18-1042; the sequence is DFTGFDNEAG…KSLDLEMIGK (1025 aa). N-linked (GlcNAc...) asparagine; by host glycans are attached at residues Asn-439, Asn-664, and Asn-875. The helical transmembrane segment at 1043–1063 threads the bilayer; sequence IILLIAFVIVFVILLTIGIIT. The Cytoplasmic portion of the chain corresponds to 1064 to 1080; it reads LVKRHRETLPEDEYLLP.

Its subcellular location is the host membrane. This is an uncharacterized protein from Ostreid herpesvirus 1 (isolate France) (OsHV-1).